We begin with the raw amino-acid sequence, 222 residues long: Collectrin (222 aa).

The signal sequence occupies residues 1–14; that stretch reads MLWLLFFLVTAIHA. Topologically, residues 15–141 are extracellular; the sequence is DLCRPDAENA…LAPPTDPSVP (127 aa). Residues 21–222 form the Collectrin-like domain; sequence AENAFKVRLS…VTEDERLTPL (202 aa). N-linked (GlcNAc...) asparagine glycans are attached at residues Asn76 and Asn93. Residues 142–162 form a helical membrane-spanning segment; the sequence is IWIIIFGVIFCIVLVATMLLI. Residues 163-222 are Cytoplasmic-facing; the sequence is ISGIRQHRRKNKGPSEMEDSEDKCENVITIENGIPCDPLDMKGGHINDAFVTEDERLTPL. Residues Thr214 and Thr220 each carry the phosphothreonine modification.

Belongs to the CLTRN family. Monomer. Homodimer; dimerization prevents CLTRN cleavage by BACE2. Interacts with SLC6A18; this interaction regulates the trafficking of SLC6A18 to the cell membrane and its amino acid transporter activity. Interacts with SLC6A19; this interaction regulates the trafficking of SLC6A19 to the cell membrane and its amino acid transporter activity. Interacts with SNAPIN. Post-translationally, glycosylated. Glycosylation is required for plasma membrane localization and for its cleavage by BACE2. In terms of processing, proteolytically processed in pancreatic beta cells by BACE2 leading to the generation and extracellular release of soluble CLTRN, and a corresponding cell-associated C-terminal fragment which is later cleaved by gamma-secretase. This shedding process inactivates CLTRN. Three cleavage sites have been identified for BACE2, two clustered sites after Phe-116 and Leu-118 and a more membrane proximal site at Phe-125; the preferred BACE2 cleavage site seems to be between Phe-125 and Leu-126, Phe-116 and Leu-118 act as alternative sites.

The protein resides in the cell membrane. In terms of biological role, plays an important role in amino acid transport by acting as binding partner of amino acid transporters SLC6A18 and SLC6A19, regulating their trafficking on the cell surface and their activity. May also play a role in trafficking of amino acid transporters SLC3A1 and SLC7A9 to the renal cortical cell membrane. Regulator of SNARE complex function. Stimulator of beta cell replication. This is Collectrin (CLTRN) from Bos taurus (Bovine).